The primary structure comprises 79 residues: Small ribosomal subunit protein bS18 (79 aa).

The protein belongs to the bacterial ribosomal protein bS18 family. In terms of assembly, part of the 30S ribosomal subunit. Forms a tight heterodimer with protein bS6.

Functionally, binds as a heterodimer with protein bS6 to the central domain of the 16S rRNA, where it helps stabilize the platform of the 30S subunit. The polypeptide is Small ribosomal subunit protein bS18 (Onion yellows phytoplasma (strain OY-M)).